Here is a 397-residue protein sequence, read N- to C-terminus: Izumo sperm-egg fusion protein 1 (397 aa).

An N-terminal signal peptide occupies residues 1 to 21; the sequence is MGPHFTLLLAALANCLCPGRP. Disulfide bonds link Cys-22–Cys-149, Cys-25–Cys-152, Cys-135–Cys-159, Cys-139–Cys-165, and Cys-182–Cys-233. Over 22 to 319 the chain is Extracellular; that stretch reads CIKCDQFVTD…QNPEKKMKTR (298 aa). Residues 148–160 are important for interaction with IZUMO1R; that stretch reads WCLKCEKQLHICR. The 85-residue stretch at 167–251 folds into the Ig-like C2-type domain; sequence ERHIEVHRSE…HATVIRYDVT (85 aa). An N-linked (GlcNAc...) asparagine glycan is attached at Asn-204. A disordered region spans residues 271–292; it reads EHETPVHVTPQTPPGQEPESEL. The helical transmembrane segment at 320-340 threads the bilayer; that stretch reads LLILLTLGFVVLVASIIISVL. The Cytoplasmic portion of the chain corresponds to 341–397; sequence HFRKVSAKLKNASDEVKPTASGSKSDQSLSQQMGLKKASQADFNSDYSGDKSEATEN. Residues 351 to 397 are disordered; that stretch reads NASDEVKPTASGSKSDQSLSQQMGLKKASQADFNSDYSGDKSEATEN. Residues 360 to 373 are compositionally biased toward polar residues; that stretch reads ASGSKSDQSLSQQM. A Phosphoserine modification is found at Ser-379. Positions 388 to 397 are enriched in basic and acidic residues; it reads SGDKSEATEN.

The protein belongs to the Izumo family. In terms of assembly, monomer, homodimer; disulfide-linked and homooligomer; depending on the context. Interacts with IZUMO1R/JUNO. IZUMO1 and IZUMO1R/JUNO form a complex with 1:1 stoichiometry. In gamete recognition, IZUMO1R/JUNO first binds to monomeric IZUMO1. The weak, but specific interaction with IZUMO1R/JUNO induces IZUMO1 homodimerization. The process follows a tight binding phase where IZUMO1 bends the entire structure towards the sperm membrane side through a thiol-disulfide exchange reaction. The molecule no longer binds to IZUMO1R/JUNO and instead binds to a putative second oocyte receptor. Interacts with ACE3. Part of a oolemmal binding multimeric complex (IZUMO1 complex) composed at least of IZUMO1 and GLIPR1L1; the complex assemblage is influenced by the maturation status of the male germ cell. Interacts with GLIPR1L1. Interacts with FREY; the interaction retains IZUMO1 at the endoplasmic reticulum membrane and coordinates IZUMO1 complex assembly. Interacts with WDR54. Forms a complex with SPACA6 and TMEM81 on spermatocyte cell membrane. Post-translationally, N-glycosylated. Glycosylation is not essential for fusion and for proper protein trafficking in sperm. Phosphorylated. The cytoplasmic C-terminus is phosphorylated and undergoes phosphorylation changes during epididymal transit. As to expression, sperm-specific (at protein level). Detectable on sperm surface only after the acrosome reaction. Expressed in spermatozoa, more abundantly expressed in the head than the tail (at protein level).

The protein localises to the cell membrane. The protein resides in the cytoplasmic vesicle. It is found in the secretory vesicle. Its subcellular location is the acrosome membrane. Functionally, essential sperm cell-surface protein required for fertilization by acting as a ligand for IZUMO1R/JUNO receptor on egg. The IZUMO1:IZUMO1R/JUNO interaction is a necessary adhesion event between sperm and egg that is required for fertilization but is not sufficient for cell fusion. The ligand-receptor interaction probably does not act as a membrane 'fusogen'. Plays a critical role in sperm-oolemma binding prior to plasma membrane fusion. Can mediate cell-cell fusion in cultured mammalian cells independently of its binding to IZUMO1R/JUNO. This is Izumo sperm-egg fusion protein 1 from Mus musculus (Mouse).